The chain runs to 122 residues: MRKMQYRSHRLSEELKKEISKMILEEIKDPRIKAMVSITDIEVTKDLRYAKVYVSIYGSEEEKRETFEGLKSAAGYIRHEIGRRIKMRYTPEIIFELDHSIEYGAKISEILKELNKQEGDDN.

Belongs to the RbfA family. In terms of assembly, monomer. Binds 30S ribosomal subunits, but not 50S ribosomal subunits or 70S ribosomes.

The protein localises to the cytoplasm. Functionally, one of several proteins that assist in the late maturation steps of the functional core of the 30S ribosomal subunit. Associates with free 30S ribosomal subunits (but not with 30S subunits that are part of 70S ribosomes or polysomes). Required for efficient processing of 16S rRNA. May interact with the 5'-terminal helix region of 16S rRNA. The chain is Ribosome-binding factor A from Caldanaerobacter subterraneus subsp. tengcongensis (strain DSM 15242 / JCM 11007 / NBRC 100824 / MB4) (Thermoanaerobacter tengcongensis).